We begin with the raw amino-acid sequence, 355 residues long: Beta-ketoacyl-[acyl-carrier-protein] synthase III (355 aa).

Catalysis depends on residues Cys-122 and His-280. The ACP-binding stretch occupies residues 281–285 (QANMR). Residue Asn-311 is part of the active site.

Belongs to the thiolase-like superfamily. FabH family. In terms of assembly, homodimer.

The protein localises to the cytoplasm. It catalyses the reaction malonyl-[ACP] + acetyl-CoA + H(+) = 3-oxobutanoyl-[ACP] + CO2 + CoA. The protein operates within lipid metabolism; fatty acid biosynthesis. Its function is as follows. Catalyzes the condensation reaction of fatty acid synthesis by the addition to an acyl acceptor of two carbons from malonyl-ACP. Catalyzes the first condensation reaction which initiates fatty acid synthesis and may therefore play a role in governing the total rate of fatty acid production. Possesses both acetoacetyl-ACP synthase and acetyl transacylase activities. Its substrate specificity determines the biosynthesis of branched-chain and/or straight-chain of fatty acids. In Kocuria rhizophila (strain ATCC 9341 / DSM 348 / NBRC 103217 / DC2201), this protein is Beta-ketoacyl-[acyl-carrier-protein] synthase III.